We begin with the raw amino-acid sequence, 266 residues long: Glucosamine-6-phosphate deaminase (266 aa).

The Proton acceptor; for enolization step role is filled by aspartate 72. The active-site For ring-opening step is the aspartate 141. The active-site Proton acceptor; for ring-opening step is histidine 143. Glutamate 148 (for ring-opening step) is an active-site residue.

Belongs to the glucosamine/galactosamine-6-phosphate isomerase family. NagB subfamily. In terms of assembly, homohexamer.

It catalyses the reaction alpha-D-glucosamine 6-phosphate + H2O = beta-D-fructose 6-phosphate + NH4(+). Its pathway is amino-sugar metabolism; N-acetylneuraminate degradation; D-fructose 6-phosphate from N-acetylneuraminate: step 5/5. Allosterically activated by N-acetylglucosamine 6-phosphate (GlcNAc6P). In terms of biological role, catalyzes the reversible isomerization-deamination of glucosamine 6-phosphate (GlcN6P) to form fructose 6-phosphate (Fru6P) and ammonium ion. The protein is Glucosamine-6-phosphate deaminase of Salmonella arizonae (strain ATCC BAA-731 / CDC346-86 / RSK2980).